The primary structure comprises 501 residues: MTEQTQDENKLIAERRAKLEHIRTNCPANGHPNNFDRKHKAADIQAEFGHNTKEELEGMGIERSIAGRVMAKRGPFLVIQDVSGRIQAYAGKDVQKDLKEKFQGLDIGDIIGVTGQLHLSGKGDLYVNMEEYQLLTKALRPLPEKFHGLTDQETRYRQRYVDLIVNEQSREAFIMRSKVVSAIRNFMVKKEFMEVETPMMHSIPGGASARPFATHHNALDIAMYLRIAPELYLKRLVVGGFERVFEINRNFRNEGLSPRHNPEFTMMEFYMAYADFNDLMDLTEEMLSSIATELCGSPQLPYGEHTVDFGGPYARLSMLDAIKKYNPDNATIQSMTYEEVKDVEFMRDLAKSLGMTVEKFWTCGQLLEEIFGETAETQLMQPTFITGYPADISPLARRNDDNHFITDRFEFFIGGREVANGFSELNDAEDQDRRFKAQVDAKDAGDDEAMFYDADYITALEHGLPPTAGQGIGIDRLVMLFTNTHTIRDVILFPAMRPQAN.

The Mg(2+) site is built by Glu-410 and Glu-417.

The protein belongs to the class-II aminoacyl-tRNA synthetase family. Homodimer. Mg(2+) is required as a cofactor.

Its subcellular location is the cytoplasm. It catalyses the reaction tRNA(Lys) + L-lysine + ATP = L-lysyl-tRNA(Lys) + AMP + diphosphate. This is Lysine--tRNA ligase from Shewanella halifaxensis (strain HAW-EB4).